A 397-amino-acid polypeptide reads, in one-letter code: MVTLTASYEELTESSAVALAIRLGLIQESSHLTCTEIGDGNLNYVFHIFDHKQEKGLIIKQALPYAKVVGESWPLTLDRARIESAALIKQSEYTPHLVPAVYYSDTALAVTAMEDLSHLEIVRKGLIAGKQYPHLSDHVGEFLGKTLFYTSDFATNPKIKKQFVKQFTNPDLCDITEKLVFTDPFFDSSTNDFEEELREAAEALWADLEVQAKAAELKRIFLTSAETLVHGDLHTGSIFASETETKIIDPEFAFYGPFGFDIGHFIANLFLNALSRENEHDQQHLFDHVVNVWATFKEVFAKAWKEDSIEAFSVSDSFLETTFDRILKEATGFAGCELVRRTIGLAHAADLDAIPSPSKRIQQKKTALTLGKTFIKQYHAVETASDLVALFQQSVKE.

Residues Asn43, Lys60, and 114-116 (EDL) contribute to the ATP site. Asp232 provides a ligand contact to substrate. Position 249 to 251 (249 to 251 (DPE)) interacts with ATP. Arg340 serves as a coordination point for substrate.

It belongs to the methylthioribose kinase family. Homodimer.

It catalyses the reaction 5-(methylsulfanyl)-D-ribose + ATP = 5-(methylsulfanyl)-alpha-D-ribose 1-phosphate + ADP + H(+). Its pathway is amino-acid biosynthesis; L-methionine biosynthesis via salvage pathway; S-methyl-5-thio-alpha-D-ribose 1-phosphate from S-methyl-5'-thioadenosine (hydrolase route): step 2/2. Its function is as follows. Catalyzes the phosphorylation of methylthioribose into methylthioribose-1-phosphate. The protein is Methylthioribose kinase of Bacillus pumilus (strain SAFR-032).